An 830-amino-acid chain; its full sequence is DNA gyrase subunit A (830 aa).

A Topo IIA-type catalytic domain is found at leucine 34–leucine 514. The O-(5'-phospho-DNA)-tyrosine intermediate role is filled by tyrosine 122. The GyrA-box signature appears at glutamine 541–glycine 547.

Belongs to the type II topoisomerase GyrA/ParC subunit family. As to quaternary structure, heterotetramer, composed of two GyrA and two GyrB chains. In the heterotetramer, GyrA contains the active site tyrosine that forms a transient covalent intermediate with DNA, while GyrB binds cofactors and catalyzes ATP hydrolysis.

The protein resides in the cytoplasm. It catalyses the reaction ATP-dependent breakage, passage and rejoining of double-stranded DNA.. Functionally, a type II topoisomerase that negatively supercoils closed circular double-stranded (ds) DNA in an ATP-dependent manner to modulate DNA topology and maintain chromosomes in an underwound state. Negative supercoiling favors strand separation, and DNA replication, transcription, recombination and repair, all of which involve strand separation. Also able to catalyze the interconversion of other topological isomers of dsDNA rings, including catenanes and knotted rings. Type II topoisomerases break and join 2 DNA strands simultaneously in an ATP-dependent manner. The protein is DNA gyrase subunit A of Buchnera aphidicola subsp. Acyrthosiphon pisum (strain APS) (Acyrthosiphon pisum symbiotic bacterium).